A 145-amino-acid polypeptide reads, in one-letter code: Large ribosomal subunit protein uL13 (145 aa).

It belongs to the universal ribosomal protein uL13 family. In terms of assembly, part of the 50S ribosomal subunit.

In terms of biological role, this protein is one of the early assembly proteins of the 50S ribosomal subunit, although it is not seen to bind rRNA by itself. It is important during the early stages of 50S assembly. This Haloquadratum walsbyi (strain DSM 16790 / HBSQ001) protein is Large ribosomal subunit protein uL13.